We begin with the raw amino-acid sequence, 490 residues long: Glutamyl-tRNA(Gln) amidotransferase subunit A (490 aa).

Active-site charge relay system residues include K78 and S159. S183 functions as the Acyl-ester intermediate in the catalytic mechanism.

This sequence belongs to the amidase family. GatA subfamily. In terms of assembly, heterotrimer of A, B and C subunits.

It catalyses the reaction L-glutamyl-tRNA(Gln) + L-glutamine + ATP + H2O = L-glutaminyl-tRNA(Gln) + L-glutamate + ADP + phosphate + H(+). Its function is as follows. Allows the formation of correctly charged Gln-tRNA(Gln) through the transamidation of misacylated Glu-tRNA(Gln) in organisms which lack glutaminyl-tRNA synthetase. The reaction takes place in the presence of glutamine and ATP through an activated gamma-phospho-Glu-tRNA(Gln). In Paramagnetospirillum magneticum (strain ATCC 700264 / AMB-1) (Magnetospirillum magneticum), this protein is Glutamyl-tRNA(Gln) amidotransferase subunit A.